Consider the following 225-residue polypeptide: Glucosyl-3-phosphoglycerate phosphatase (225 aa).

Arginine 10 is a binding site for substrate. The active-site Tele-phosphohistidine intermediate is histidine 11. Residue arginine 60 coordinates substrate. Residue glutamate 84 is the Proton donor/acceptor of the active site. Histidine 158 lines the substrate pocket.

This sequence belongs to the phosphoglycerate mutase family. Homodimer.

The enzyme catalyses (2R)-2-O-(alpha-D-glucopyranosyl)-3-phospho-glycerate + H2O = (2R)-2-O-(alpha-D-glucopyranosyl)-glycerate + phosphate. Functionally, involved in the biosynthesis of mycobacterial methylglucose lipopolysaccharides (MGLP). Catalyzes the dephosphorylation of glucosyl-3-phosphoglycerate (GPG) to glucosylglycerate. This Mycolicibacterium vanbaalenii (strain DSM 7251 / JCM 13017 / BCRC 16820 / KCTC 9966 / NRRL B-24157 / PYR-1) (Mycobacterium vanbaalenii) protein is Glucosyl-3-phosphoglycerate phosphatase.